We begin with the raw amino-acid sequence, 252 residues long: 3-deoxy-manno-octulosonate cytidylyltransferase (252 aa).

Belongs to the KdsB family.

The protein localises to the cytoplasm. It carries out the reaction 3-deoxy-alpha-D-manno-oct-2-ulosonate + CTP = CMP-3-deoxy-beta-D-manno-octulosonate + diphosphate. It functions in the pathway nucleotide-sugar biosynthesis; CMP-3-deoxy-D-manno-octulosonate biosynthesis; CMP-3-deoxy-D-manno-octulosonate from 3-deoxy-D-manno-octulosonate and CTP: step 1/1. It participates in bacterial outer membrane biogenesis; lipopolysaccharide biosynthesis. Its function is as follows. Activates KDO (a required 8-carbon sugar) for incorporation into bacterial lipopolysaccharide in Gram-negative bacteria. This is 3-deoxy-manno-octulosonate cytidylyltransferase from Solibacter usitatus (strain Ellin6076).